A 456-amino-acid polypeptide reads, in one-letter code: uncharacterized protein (456 aa).

A TRAM domain is found at 3-61 (TIKKNEVKTGKVIDLTHEGHGVVKVDRYPIFIPNALIDEEIKFKLIKVKKNFAIGKLIE). Cys-74, Cys-80, Cys-83, and Cys-162 together coordinate [4Fe-4S] cluster. 4 residues coordinate S-adenosyl-L-methionine: Gln-286, Tyr-315, Glu-336, and Asp-384. The active-site Nucleophile is Cys-411.

Belongs to the class I-like SAM-binding methyltransferase superfamily. RNA M5U methyltransferase family.

This is an uncharacterized protein from Staphylococcus epidermidis (strain ATCC 12228 / FDA PCI 1200).